Here is a 369-residue protein sequence, read N- to C-terminus: Chanoclavine-I aldehyde reductase fgaOx3 (369 aa).

FMN-binding positions include 23-25, alanine 58, glutamine 100, and histidine 169; that span reads PMT. 2 residues coordinate substrate: histidine 169 and asparagine 172. The active-site Proton donor is tyrosine 174. FMN contacts are provided by residues glycine 292, 316 to 317, and arginine 317; that span reads GR. Tyrosine 344 contributes to the substrate binding site.

Belongs to the NADH:flavin oxidoreductase/NADH oxidase family. In terms of assembly, monomer. FMN is required as a cofactor.

The enzyme catalyses dihydrochanoclavine-I aldehyde + NADP(+) = chanoclavine-I aldehyde + NADPH + H(+). Its pathway is alkaloid biosynthesis; ergot alkaloid biosynthesis. Functionally, chanoclavine-I aldehyde reductase; part of the gene cluster that mediates the biosynthesis of isofumigaclavines, fungal ergot alkaloids. The tryptophan dimethylallyltransferase ifgA catalyzes the first step of ergot alkaloid biosynthesis by condensing dimethylallyl diphosphate (DMAP) and tryptophan to form 4-dimethylallyl-L-tryptophan. The second step is catalyzed by the methyltransferase ifgB that methylates 4-dimethylallyl-L-tryptophan in the presence of S-adenosyl-L-methionine, resulting in the formation of N-methyl-dimethylallyl-L-tryptophan. The catalase ifgD and the FAD-dependent oxidoreductase ifgC then transform N-methyl-dimethylallyl-L-tryptophan to chanoclavine-I which is further oxidized by ifgE in the presence of NAD(+), resulting in the formation of chanoclavine-I aldehyde. The chanoclavine-I aldehyde reductases ifgG and/or fgaOx3 reduce chanoclavine-I aldehyde to dihydrochanoclavine-I aldehyde that spontaneously dehydrates to form 6,8-dimethyl-6,7-didehydroergoline. The festuclavine dehydrogenases ifgF1 and/or ifgF2 then catalyze the reduction of 6,8-dimethyl-6,7-didehydroergoline to form festuclavine. Hydrolysis of festuclavine by a yet undetermined cytochrome P450 monooxygenase (called ifgH) then leads to the formation of isofumigaclavine B which is in turn acetylated by ifgI to isofumigaclavine A. Penicillium roqueforti has interestingly at least two sets of genes for the consumption of chanoclavine-I aldehyde on three different loci, the OYEs ifgG/fgaOx3 and the festuclavine synthase homologs ifgF1/ifgF2. The reason for the duplication of these genes is unclear, probably to ensure the conversion of chanoclavine-I aldehyde by differential gene expression under various environmental conditions. This is Chanoclavine-I aldehyde reductase fgaOx3 from Penicillium roqueforti (strain FM164).